The primary structure comprises 123 residues: Small ribosomal subunit protein uS12cz/uS12cy (123 aa).

This sequence belongs to the universal ribosomal protein uS12 family. As to quaternary structure, part of the 30S ribosomal subunit.

Its subcellular location is the plastid. The protein localises to the chloroplast. In terms of biological role, with S4 and S5 plays an important role in translational accuracy. Located at the interface of the 30S and 50S subunits. The sequence is that of Small ribosomal subunit protein uS12cz/uS12cy (rps12-A) from Populus alba (White poplar).